The primary structure comprises 175 residues: Peptide deformylase (175 aa).

Positions 99 and 141 each coordinate Fe cation. Residue glutamate 142 is part of the active site. Residue histidine 145 coordinates Fe cation.

Belongs to the polypeptide deformylase family. Fe(2+) serves as cofactor.

The catalysed reaction is N-terminal N-formyl-L-methionyl-[peptide] + H2O = N-terminal L-methionyl-[peptide] + formate. Removes the formyl group from the N-terminal Met of newly synthesized proteins. Requires at least a dipeptide for an efficient rate of reaction. N-terminal L-methionine is a prerequisite for activity but the enzyme has broad specificity at other positions. In Rickettsia canadensis (strain McKiel), this protein is Peptide deformylase.